The chain runs to 327 residues: Lipoyl synthase (327 aa).

Cysteine 66, cysteine 71, cysteine 77, cysteine 92, cysteine 96, cysteine 99, and serine 306 together coordinate [4Fe-4S] cluster. Positions 78-295 (FSKGTATFMI…EKEAYELGFS (218 aa)) constitute a Radical SAM core domain.

Belongs to the radical SAM superfamily. Lipoyl synthase family. Requires [4Fe-4S] cluster as cofactor.

The protein localises to the cytoplasm. It carries out the reaction [[Fe-S] cluster scaffold protein carrying a second [4Fe-4S](2+) cluster] + N(6)-octanoyl-L-lysyl-[protein] + 2 oxidized [2Fe-2S]-[ferredoxin] + 2 S-adenosyl-L-methionine + 4 H(+) = [[Fe-S] cluster scaffold protein] + N(6)-[(R)-dihydrolipoyl]-L-lysyl-[protein] + 4 Fe(3+) + 2 hydrogen sulfide + 2 5'-deoxyadenosine + 2 L-methionine + 2 reduced [2Fe-2S]-[ferredoxin]. It participates in protein modification; protein lipoylation via endogenous pathway; protein N(6)-(lipoyl)lysine from octanoyl-[acyl-carrier-protein]: step 2/2. Its function is as follows. Catalyzes the radical-mediated insertion of two sulfur atoms into the C-6 and C-8 positions of the octanoyl moiety bound to the lipoyl domains of lipoate-dependent enzymes, thereby converting the octanoylated domains into lipoylated derivatives. This is Lipoyl synthase from Neisseria meningitidis serogroup B (strain ATCC BAA-335 / MC58).